Consider the following 666-residue polypeptide: tRNA 5-methylaminomethyl-2-thiouridine biosynthesis bifunctional protein MnmC (666 aa).

Positions 1 to 253 (MSSPFVPIIT…KRHMICAHYE (253 aa)) are tRNA (mnm(5)s(2)U34)-methyltransferase. Positions 283–666 (VGGGLAGCFI…FLRKKIIQGP (384 aa)) are FAD-dependent cmnm(5)s(2)U34 oxidoreductase.

This sequence in the N-terminal section; belongs to the methyltransferase superfamily. tRNA (mnm(5)s(2)U34)-methyltransferase family. The protein in the C-terminal section; belongs to the DAO family. It depends on FAD as a cofactor.

It localises to the cytoplasm. It carries out the reaction 5-aminomethyl-2-thiouridine(34) in tRNA + S-adenosyl-L-methionine = 5-methylaminomethyl-2-thiouridine(34) in tRNA + S-adenosyl-L-homocysteine + H(+). Catalyzes the last two steps in the biosynthesis of 5-methylaminomethyl-2-thiouridine (mnm(5)s(2)U) at the wobble position (U34) in tRNA. Catalyzes the FAD-dependent demodification of cmnm(5)s(2)U34 to nm(5)s(2)U34, followed by the transfer of a methyl group from S-adenosyl-L-methionine to nm(5)s(2)U34, to form mnm(5)s(2)U34. The protein is tRNA 5-methylaminomethyl-2-thiouridine biosynthesis bifunctional protein MnmC of Legionella pneumophila (strain Lens).